A 435-amino-acid chain; its full sequence is Glutamate-1-semialdehyde 2,1-aminomutase (435 aa).

Residue K269 is modified to N6-(pyridoxal phosphate)lysine.

This sequence belongs to the class-III pyridoxal-phosphate-dependent aminotransferase family. HemL subfamily. Homodimer. Pyridoxal 5'-phosphate is required as a cofactor.

It localises to the cytoplasm. The enzyme catalyses (S)-4-amino-5-oxopentanoate = 5-aminolevulinate. Its pathway is porphyrin-containing compound metabolism; protoporphyrin-IX biosynthesis; 5-aminolevulinate from L-glutamyl-tRNA(Glu): step 2/2. The chain is Glutamate-1-semialdehyde 2,1-aminomutase from Gemmatimonas aurantiaca (strain DSM 14586 / JCM 11422 / NBRC 100505 / T-27).